A 671-amino-acid chain; its full sequence is Phospholipid:diacylglycerol acyltransferase 1 (671 aa).

The disordered stretch occupies residues 1–46 (MPLIHRKKPTEKPSTPPSEEVVHDEDSQKKPHESSKSHHKKSNGGG). The Cytoplasmic segment spans residues 1 to 54 (MPLIHRKKPTEKPSTPPSEEVVHDEDSQKKPHESSKSHHKKSNGGGKWSCIDSC). Basic and acidic residues predominate over residues 20 to 36 (EVVHDEDSQKKPHESSK). Residues 55-75 (CWFIGCVCVTWWFLLFLYNAM) form a helical membrane-spanning segment. Topologically, residues 76 to 671 (PASFPQYVTE…EWSERIDLKL (596 aa)) are lumenal. N-linked (GlcNAc...) asparagine glycosylation occurs at Asn-161. The active-site Acyl-ester intermediate is Ser-254. 2 N-linked (GlcNAc...) asparagine glycosylation sites follow: Asn-381 and Asn-434. Catalysis depends on charge relay system residues Asp-573 and His-626. An N-linked (GlcNAc...) asparagine glycan is attached at Asn-647.

It belongs to the AB hydrolase superfamily. Lipase family. In terms of tissue distribution, ubiquitous. Highest expression in young developing seeds.

The protein localises to the membrane. It carries out the reaction a glycerophospholipid + a 1,2-diacyl-sn-glycerol = a monoacylglycerophospholipid + a triacyl-sn-glycerol. It participates in glycerolipid metabolism; triacylglycerol biosynthesis. Triacylglycerol formation by an acyl-CoA independent pathway. The enzyme preferentially transfers acyl groups from the sn-2 position of a phospholipid to diacylglycerol, thus forming an sn-1-lysophospholipid. Involved in epoxy and hydroxy fatty acid accumulation in seeds. Has complementary functions with DAG1 that are essential for triacylglycerol synthesis and normal development of both seeds and pollen. The protein is Phospholipid:diacylglycerol acyltransferase 1 (PDAT1) of Arabidopsis thaliana (Mouse-ear cress).